A 193-amino-acid chain; its full sequence is Imidazoleglycerol-phosphate dehydratase (193 aa).

Belongs to the imidazoleglycerol-phosphate dehydratase family.

The protein localises to the cytoplasm. The enzyme catalyses D-erythro-1-(imidazol-4-yl)glycerol 3-phosphate = 3-(imidazol-4-yl)-2-oxopropyl phosphate + H2O. The protein operates within amino-acid biosynthesis; L-histidine biosynthesis; L-histidine from 5-phospho-alpha-D-ribose 1-diphosphate: step 6/9. The chain is Imidazoleglycerol-phosphate dehydratase from Metallosphaera sedula (strain ATCC 51363 / DSM 5348 / JCM 9185 / NBRC 15509 / TH2).